The sequence spans 366 residues: Ubiquitin carboxyl-terminal hydrolase 46 (366 aa).

The 331-residue stretch at 35–365 (FGLVNFGNTC…SGYILFYQSR (331 aa)) folds into the USP domain. The Nucleophile role is filled by cysteine 44. Residues cysteine 182, cysteine 185, cysteine 229, and cysteine 232 each contribute to the Zn(2+) site. The active-site Proton acceptor is the histidine 313.

It belongs to the peptidase C19 family. USP12/USP46 subfamily. As to quaternary structure, interacts with WDR48. Interacts with WDR20. Interacts with DMWD. Component of the USP46/WDR20/WDR48 deubiquitinating complex. Broadly expressed.

It is found in the cytoplasm. It catalyses the reaction Thiol-dependent hydrolysis of ester, thioester, amide, peptide and isopeptide bonds formed by the C-terminal Gly of ubiquitin (a 76-residue protein attached to proteins as an intracellular targeting signal).. Its activity is regulated as follows. Activated by interaction with WDR48. In terms of biological role, deubiquitinating enzyme that plays a role in behavior, possibly by regulating GABA action. May act by mediating the deubiquitination of GAD1/GAD67. Has almost no deubiquitinating activity by itself and requires the interaction with WDR48 to have a high activity. Not involved in deubiquitination of monoubiquitinated FANCD2. This is Ubiquitin carboxyl-terminal hydrolase 46 (USP46) from Homo sapiens (Human).